The following is a 922-amino-acid chain: Cell cycle and apoptosis regulator protein 2 (922 aa).

Residues 1–39 (MSQFKRQRINPLPGGRNFSGAASTSLLGPPPGLLTPPVA) form a disordered region. T35 is subject to Phosphothreonine. K112 is modified (N6-acetyllysine; by KAT8). K123 carries the post-translational modification N6-methyllysine. S124 carries the phosphoserine modification. 4 disordered regions span residues 178–219 (LNRF…KPRH), 280–307 (RIQV…PTYS), 446–508 (KATE…EPAV), and 567–638 (VSPP…RGEA). Residue R180 is modified to Omega-N-methylarginine. The span at 188 to 200 (GRLDQGRSDDYDS) shows a compositional bias: basic and acidic residues. At K215 the chain carries N6-acetyllysine; by KAT8. Positions 473–491 (QADTSKQNTETMEATTQQD) are enriched in polar residues. Phosphothreonine is present on T483. S568 carries the post-translational modification Phosphoserine. A compositionally biased stretch (basic and acidic residues) spans 571-601 (EPEKEEAAKEDAVKEEEAVKEEAVKVSKDEV). Residues 573 to 596 (EKEEAAKEDAVKEEEAVKEEAVKV) adopt a coiled-coil conformation. Residue K590 forms a Glycyl lysine isopeptide (Lys-Gly) (interchain with G-Cter in SUMO2 and SUMO3); alternate linkage. Residue K590 forms a Glycyl lysine isopeptide (Lys-Gly) (interchain with G-Cter in SUMO2); alternate linkage. An interaction with MCC region spans residues 609–669 (ESDSPLKEDG…DEFAGAKLEE (61 aa)). Phosphoserine is present on residues S612, S626, S674, S677, and S680. Phosphotyrosine is present on Y684. S686 and S807 each carry phosphoserine. The interaction with NR1D1 stretch occupies residues 703–922 (DCLLAFVFFD…VEKEEPTPSN (220 aa)). The stretch at 828–898 (LENKIHTLEL…QDFRRRLTPL (71 aa)) forms a coiled coil. Position 896 is a phosphothreonine (T896).

As to quaternary structure, component of the DBIRD complex. Interacts with ZNF326/ZIRD; the interaction is direct. Interacts (via N-terminus) with SIRT1, which inhibits the deacetylation of substrates. Interacts (via N-terminus) with SUV39H1; this interaction abolishes the interaction with SIRT1. Component of a nuclear receptor-mediated transcription complex composed of at least ZNF335, CCAR2 and EMSY; the complex stimulates the transcription of nuclear receptor target genes such as SOX9 and HOXA1. Within the complex interacts with EMSY and interacts with ZNF335 (via C-terminus). Components of this complex may associate with components of a histone methylation complex to form a complex at least composed of ZNF335, HCFC1, CCAR2, EMSY, MKI67, RBBP5, ASH2L and WDR5. Within this complex, interacts with ASH2L. Interacts with NR1D1. Interacts (via N-terminus) with ESR1 and ESR2. Interacts (via N-terminus) with HDAC3 (via C-terminus). Interacts with HDAC1 and MED2F. Interacts with MCC. Interacts (via N-terminus) with NR1H2 and NR1H3 in a ligand-independent manner. Interacts with CSNK2A1. Interacts (via N-terminus) with p53/TP53. Interacts (via N-terminus) with BRCA1 (via the BRCT domains). Interacts (via N-terminus) with CHEK2 (via protein kinase domain). Interacts with PSEM3. Interacts (via N-terminus) with PSIA3 and SENP1. The sumoylated form shows a preferential interaction with SIRT1 as compared to its unmodified form. Interacts with CECR2; may form part of the CERF-1 and/or CEF-5 ISWI chromatin remodeling complexes in embryonic stem cells. Post-translationally, acetylation at Lys-112 and Lys-215 by KAT8 prevents inhibitory binding to SIRT1 and increases its deacetylase activity. Genotoxic stress induces its sumoylation and sumoylation promotes the SIRT1-CCAR2 interaction which in turn inhibits SIRT1-mediated deacetylation of p53/TP53. Sumoylation leads to transcriptional activation of p53/TP53 by sequestering SIRT1 from p53/TP53. Desumoylated by SENP1.

The protein localises to the nucleus. Its subcellular location is the cytoplasm. It localises to the cytoskeleton. The protein resides in the spindle. Core component of the DBIRD complex, a multiprotein complex that acts at the interface between core mRNP particles and RNA polymerase II (RNAPII) and integrates transcript elongation with the regulation of alternative splicing: the DBIRD complex affects local transcript elongation rates and alternative splicing of a large set of exons embedded in (A + T)-rich DNA regions. Inhibits SIRT1 deacetylase activity leading to increasing levels of p53/TP53 acetylation and p53-mediated apoptosis. Inhibits SUV39H1 methyltransferase activity. Mediates ligand-dependent transcriptional activation by nuclear hormone receptors. Plays a critical role in maintaining genomic stability and cellular integrity following UV-induced genotoxic stress. Regulates the circadian expression of the core clock components NR1D1 and BMAL1. Enhances the transcriptional repressor activity of NR1D1 through stabilization of NR1D1 protein levels by preventing its ubiquitination and subsequent degradation. Represses the ligand-dependent transcriptional activation function of ESR2. Acts as a regulator of PCK1 expression and gluconeogenesis by a mechanism that involves, at least in part, both NR1D1 and SIRT1. Negatively regulates the deacetylase activity of HDAC3 and can alter its subcellular localization. Positively regulates the beta-catenin pathway (canonical Wnt signaling pathway) and is required for MCC-mediated repression of the beta-catenin pathway. Represses ligand-dependent transcriptional activation function of NR1H2 and NR1H3 and inhibits the interaction of SIRT1 with NR1H3. Plays an important role in tumor suppression through p53/TP53 regulation; stabilizes p53/TP53 by affecting its interaction with ubiquitin ligase MDM2. Represses the transcriptional activator activity of BRCA1. Inhibits SIRT1 in a CHEK2 and PSEM3-dependent manner and inhibits the activity of CHEK2 in vitro. This is Cell cycle and apoptosis regulator protein 2 (Ccar2) from Mus musculus (Mouse).